A 375-amino-acid chain; its full sequence is Growth/differentiation factor 8 (375 aa).

The N-terminal stretch at 1 to 23 (MQKLQIFVYIYLFMLLVAGPVDL) is a signal peptide. Residues 24–266 (NENSEQKENV…VTDTPKRSRR (243 aa)) constitute a propeptide that is removed on maturation. 2 N-linked (GlcNAc...) asparagine glycosylation sites follow: Asn-48 and Asn-71. 4 disulfide bridges follow: Cys-272–Cys-282, Cys-281–Cys-340, Cys-309–Cys-372, and Cys-313–Cys-374.

The protein belongs to the TGF-beta family. In terms of assembly, homodimer; disulfide-linked. Interacts with WFIKKN2, leading to inhibit its activity. Interacts with FSTL3. In terms of processing, synthesized as large precursor molecule that undergoes proteolytic cleavage to generate an N-terminal propeptide and a disulfide linked C-terminal dimer, which is the biologically active molecule. The circulating form consists of a latent complex of the C-terminal dimer and other proteins, including its propeptide, which maintain the C-terminal dimer in a latent, inactive state. Ligand activation requires additional cleavage of the prodomain by a tolloid-like metalloproteinase.

The protein localises to the secreted. In terms of biological role, acts specifically as a negative regulator of skeletal muscle growth. The polypeptide is Growth/differentiation factor 8 (MSTN) (Ovis aries (Sheep)).